The primary structure comprises 172 residues: S-ribosylhomocysteine lyase (172 aa).

Positions 54, 58, and 128 each coordinate Fe cation.

It belongs to the LuxS family. Homodimer. It depends on Fe cation as a cofactor.

The enzyme catalyses S-(5-deoxy-D-ribos-5-yl)-L-homocysteine = (S)-4,5-dihydroxypentane-2,3-dione + L-homocysteine. Its function is as follows. Involved in the synthesis of autoinducer 2 (AI-2) which is secreted by bacteria and is used to communicate both the cell density and the metabolic potential of the environment. The regulation of gene expression in response to changes in cell density is called quorum sensing. Catalyzes the transformation of S-ribosylhomocysteine (RHC) to homocysteine (HC) and 4,5-dihydroxy-2,3-pentadione (DPD). This chain is S-ribosylhomocysteine lyase, found in Vibrio parahaemolyticus serotype O3:K6 (strain RIMD 2210633).